We begin with the raw amino-acid sequence, 331 residues long: DNA-directed RNA polymerase subunit alpha (331 aa).

Positions 1–233 (MVREKVTVST…DLFIPFLHAE (233 aa)) are alpha N-terminal domain (alpha-NTD). The alpha C-terminal domain (alpha-CTD) stretch occupies residues 265-331 (KEIELKYIFI…GILEKHFTID (67 aa)).

Belongs to the RNA polymerase alpha chain family. As to quaternary structure, in plastids the minimal PEP RNA polymerase catalytic core is composed of four subunits: alpha, beta, beta', and beta''. When a (nuclear-encoded) sigma factor is associated with the core the holoenzyme is formed, which can initiate transcription.

Its subcellular location is the plastid. It is found in the chloroplast. The enzyme catalyses RNA(n) + a ribonucleoside 5'-triphosphate = RNA(n+1) + diphosphate. DNA-dependent RNA polymerase catalyzes the transcription of DNA into RNA using the four ribonucleoside triphosphates as substrates. The chain is DNA-directed RNA polymerase subunit alpha from Vitis vinifera (Grape).